Consider the following 343-residue polypeptide: NADP-dependent alkenal double bond reductase P2 (343 aa).

Substrate contacts are provided by tyrosine 52 and tyrosine 79. Residues 164–167, lysine 190, tyrosine 206, asparagine 230, 252–258, 282–284, and asparagine 332 contribute to the NADP(+) site; these read GAVG, CGMISQY, and FVV.

Belongs to the NADP-dependent oxidoreductase L4BD family. As to quaternary structure, homodimer.

The catalysed reaction is an n-alkanal + NAD(+) = an alk-2-enal + NADH + H(+). It catalyses the reaction an n-alkanal + NADP(+) = an alk-2-enal + NADPH + H(+). In terms of biological role, catalyzes the reduction of the 7-8 double bond of phenylpropanal substrates, such as p-coumaryl aldehyde and coniferyl aldehyde (in vitro). Has activity towards toxic substrates, such as 4-hydroxy-(2E)-nonenal (in vitro). May play a distinct role in plant antioxidant defense and is possibly involved in NAD(P)/NAD(P)h homeostasis. The protein is NADP-dependent alkenal double bond reductase P2 (P2) of Arabidopsis thaliana (Mouse-ear cress).